Consider the following 337-residue polypeptide: Phenylalanine--tRNA ligase alpha subunit (337 aa).

A Mg(2+)-binding site is contributed by E252.

It belongs to the class-II aminoacyl-tRNA synthetase family. Phe-tRNA synthetase alpha subunit type 1 subfamily. Tetramer of two alpha and two beta subunits. Mg(2+) serves as cofactor.

The protein resides in the cytoplasm. It catalyses the reaction tRNA(Phe) + L-phenylalanine + ATP = L-phenylalanyl-tRNA(Phe) + AMP + diphosphate + H(+). This Francisella tularensis subsp. holarctica (strain OSU18) protein is Phenylalanine--tRNA ligase alpha subunit.